Here is a 179-residue protein sequence, read N- to C-terminus: Ribosome maturation factor RimM (179 aa).

Residues 100–176 (KEEFHLLELI…FLIINPPNGL (77 aa)) enclose the PRC barrel domain.

It belongs to the RimM family. As to quaternary structure, binds ribosomal protein uS19.

It is found in the cytoplasm. An accessory protein needed during the final step in the assembly of 30S ribosomal subunit, possibly for assembly of the head region. Essential for efficient processing of 16S rRNA. May be needed both before and after RbfA during the maturation of 16S rRNA. It has affinity for free ribosomal 30S subunits but not for 70S ribosomes. The polypeptide is Ribosome maturation factor RimM (Prochlorococcus marinus (strain MIT 9312)).